The sequence spans 400 residues: MKNYHAPDEKGFFGEHGGLYVSETLIPALQELADAYKAAKNDPEFWEAFRHDLKHYVGRPSPVYHAARLSEHLGGAQIWLKREDLNHTGAHKVNNTIGQALLAKRMGKKRVIAETGAGQHGVASATVAARFGMTCDVYMGADDIQRQMPNVFRMKLLGANVVGVESGSRTLKDAMNEAMREWVARVDDTFYIIGTAAGPAPYPEMVRDFQCVIGNEAKAQMQEAIGRQPDVAVACVGGGSNAIGLFHPYIGEENVRLVGVEAGGLGVNTPDHAAPITSGAPIGVLHGFRSYLMQDENGQVLGTHSVSAGLDYPGIGPEHSHLHDIKRVEYTVAKDDEALEAFDLLCRFEGIIPALESSHAVAWAVKNAPKMGKDQVILVNLSGRGDKDINTVAKLKGIKL.

Position 92 is an N6-(pyridoxal phosphate)lysine (Lys92).

Belongs to the TrpB family. As to quaternary structure, tetramer of two alpha and two beta chains. Pyridoxal 5'-phosphate is required as a cofactor.

The enzyme catalyses (1S,2R)-1-C-(indol-3-yl)glycerol 3-phosphate + L-serine = D-glyceraldehyde 3-phosphate + L-tryptophan + H2O. The protein operates within amino-acid biosynthesis; L-tryptophan biosynthesis; L-tryptophan from chorismate: step 5/5. In terms of biological role, the beta subunit is responsible for the synthesis of L-tryptophan from indole and L-serine. In Neisseria meningitidis serogroup B (strain ATCC BAA-335 / MC58), this protein is Tryptophan synthase beta chain.